We begin with the raw amino-acid sequence, 137 residues long: Small ribosomal subunit protein uS9 (137 aa).

Residues 105-117 are compositionally biased toward basic and acidic residues; that stretch reads LKVEGYLTRDPRA. Positions 105 to 137 are disordered; sequence LKVEGYLTRDPRAKERKKYGLRKARKAPQYSKR. The span at 118–137 shows a compositional bias: basic residues; it reads KERKKYGLRKARKAPQYSKR.

This sequence belongs to the universal ribosomal protein uS9 family.

This is Small ribosomal subunit protein uS9 from Cyanothece sp. (strain PCC 7425 / ATCC 29141).